A 147-amino-acid chain; its full sequence is Protein MioC (147 aa).

The region spanning 4-143 is the Flavodoxin-like domain; it reads ITLISGSTLG…PAEEWLGSWV (140 aa).

This sequence belongs to the flavodoxin family. MioC subfamily. In terms of assembly, homodimer. FMN is required as a cofactor.

Functionally, probable electron transporter required for biotin synthase activity. The protein is Protein MioC (mioC) of Escherichia coli (strain K12).